We begin with the raw amino-acid sequence, 305 residues long: NAD kinase (305 aa).

Catalysis depends on aspartate 84, which acts as the Proton acceptor. Residues 84–85 (DG), 159–160 (NE), histidine 170, arginine 187, aspartate 189, 200–205 (TAYSLS), and glutamine 260 each bind NAD(+).

It belongs to the NAD kinase family. Requires a divalent metal cation as cofactor.

The protein resides in the cytoplasm. The enzyme catalyses NAD(+) + ATP = ADP + NADP(+) + H(+). In terms of biological role, involved in the regulation of the intracellular balance of NAD and NADP, and is a key enzyme in the biosynthesis of NADP. Catalyzes specifically the phosphorylation on 2'-hydroxyl of the adenosine moiety of NAD to yield NADP. The chain is NAD kinase from Pasteurella multocida (strain Pm70).